The chain runs to 236 residues: 2-C-methyl-D-erythritol 4-phosphate cytidylyltransferase (236 aa).

Belongs to the IspD/TarI cytidylyltransferase family. IspD subfamily. Homodimer.

The catalysed reaction is 2-C-methyl-D-erythritol 4-phosphate + CTP + H(+) = 4-CDP-2-C-methyl-D-erythritol + diphosphate. Its pathway is isoprenoid biosynthesis; isopentenyl diphosphate biosynthesis via DXP pathway; isopentenyl diphosphate from 1-deoxy-D-xylulose 5-phosphate: step 2/6. In terms of biological role, catalyzes the formation of 4-diphosphocytidyl-2-C-methyl-D-erythritol from CTP and 2-C-methyl-D-erythritol 4-phosphate (MEP). In Shigella flexneri serotype 5b (strain 8401), this protein is 2-C-methyl-D-erythritol 4-phosphate cytidylyltransferase.